Reading from the N-terminus, the 94-residue chain is Integration host factor subunit beta (94 aa).

The protein belongs to the bacterial histone-like protein family. Heterodimer of an alpha and a beta chain.

This protein is one of the two subunits of integration host factor, a specific DNA-binding protein that functions in genetic recombination as well as in transcriptional and translational control. The polypeptide is Integration host factor subunit beta (Pectobacterium atrosepticum (strain SCRI 1043 / ATCC BAA-672) (Erwinia carotovora subsp. atroseptica)).